The chain runs to 237 residues: tRNA (guanine-N(1)-)-methyltransferase (237 aa).

S-adenosyl-L-methionine-binding positions include Gly112 and Ile132–Leu137.

It belongs to the RNA methyltransferase TrmD family. As to quaternary structure, homodimer.

The protein localises to the cytoplasm. The enzyme catalyses guanosine(37) in tRNA + S-adenosyl-L-methionine = N(1)-methylguanosine(37) in tRNA + S-adenosyl-L-homocysteine + H(+). Specifically methylates guanosine-37 in various tRNAs. This chain is tRNA (guanine-N(1)-)-methyltransferase, found in Thermosynechococcus vestitus (strain NIES-2133 / IAM M-273 / BP-1).